We begin with the raw amino-acid sequence, 371 residues long: Putative ribonuclease 3 (371 aa).

One can recognise an RNase III domain in the interval 10–136 (AKSVKDKYIP…FLGAVCMAVD (127 aa)).

The protein belongs to the IIV-6 142R family.

The catalysed reaction is Endonucleolytic cleavage to 5'-phosphomonoester.. Functionally, digests double-stranded RNA. The protein is Putative ribonuclease 3 of Frog virus 3 (isolate Goorha) (FV-3).